Consider the following 362-residue polypeptide: Adenosine kinase (362 aa).

Residue A2 is modified to N-acetylalanine. The Nuclear localization signal motif lies at P8–E16. D35 is a binding site for adenosine. S49 lines the Mg(2+) pocket. At Y77 the chain carries Phosphotyrosine. Mg(2+) is bound by residues D147 and N148. Adenosine is bound at residue Q306. The active-site Proton acceptor is D317.

The protein belongs to the carbohydrate kinase PfkB family. In terms of assembly, monomer. Requires Mg(2+) as cofactor. In terms of tissue distribution, widely expressed. Highest level in placenta, liver, muscle and kidney.

It localises to the nucleus. The protein localises to the cytoplasm. It catalyses the reaction adenosine + ATP = AMP + ADP + H(+). It functions in the pathway purine metabolism; AMP biosynthesis via salvage pathway; AMP from adenosine: step 1/1. Activity is inhibited by 5-iodotubercidin and 5'-amino-5'-deoxyadenosine. In terms of biological role, catalyzes the phosphorylation of the purine nucleoside adenosine at the 5' position in an ATP-dependent manner. Serves as a potential regulator of concentrations of extracellular adenosine and intracellular adenine nucleotides. The polypeptide is Adenosine kinase (Homo sapiens (Human)).